The primary structure comprises 413 residues: Multifunctional CCA protein (413 aa).

ATP contacts are provided by glycine 8 and arginine 11. Residues glycine 8 and arginine 11 each contribute to the CTP site. Aspartate 21 and aspartate 23 together coordinate Mg(2+). ATP is bound by residues arginine 91, arginine 137, and arginine 140. CTP-binding residues include arginine 91, arginine 137, and arginine 140. An HD domain is found at 228 to 329; sequence TGVHTLMTLS…VKLFDAIDAW (102 aa).

Belongs to the tRNA nucleotidyltransferase/poly(A) polymerase family. Bacterial CCA-adding enzyme type 1 subfamily. As to quaternary structure, monomer. Can also form homodimers and oligomers. It depends on Mg(2+) as a cofactor. Ni(2+) serves as cofactor.

The enzyme catalyses a tRNA precursor + 2 CTP + ATP = a tRNA with a 3' CCA end + 3 diphosphate. It carries out the reaction a tRNA with a 3' CCA end + 2 CTP + ATP = a tRNA with a 3' CCACCA end + 3 diphosphate. Catalyzes the addition and repair of the essential 3'-terminal CCA sequence in tRNAs without using a nucleic acid template. Adds these three nucleotides in the order of C, C, and A to the tRNA nucleotide-73, using CTP and ATP as substrates and producing inorganic pyrophosphate. tRNA 3'-terminal CCA addition is required both for tRNA processing and repair. Also involved in tRNA surveillance by mediating tandem CCA addition to generate a CCACCA at the 3' terminus of unstable tRNAs. While stable tRNAs receive only 3'-terminal CCA, unstable tRNAs are marked with CCACCA and rapidly degraded. The sequence is that of Multifunctional CCA protein from Salmonella typhimurium (strain LT2 / SGSC1412 / ATCC 700720).